The primary structure comprises 121 residues: Small ribosomal subunit protein uS13 (121 aa).

A disordered region spans residues 94 to 121; the sequence is GLPVRGQRTRTNSRTRKGPKKGAAALKK.

The protein belongs to the universal ribosomal protein uS13 family. In terms of assembly, part of the 30S ribosomal subunit. Forms a loose heterodimer with protein S19. Forms two bridges to the 50S subunit in the 70S ribosome.

In terms of biological role, located at the top of the head of the 30S subunit, it contacts several helices of the 16S rRNA. In the 70S ribosome it contacts the 23S rRNA (bridge B1a) and protein L5 of the 50S subunit (bridge B1b), connecting the 2 subunits; these bridges are implicated in subunit movement. Contacts the tRNAs in the A and P-sites. The protein is Small ribosomal subunit protein uS13 of Leptothrix cholodnii (strain ATCC 51168 / LMG 8142 / SP-6) (Leptothrix discophora (strain SP-6)).